The following is a 269-amino-acid chain: Ethylene-responsive transcription factor ERN1 (269 aa).

The segment covering 1 to 15 has biased composition (polar residues); sequence MEIQFQQPNLQQHQK. Disordered regions lie at residues 1 to 36 and 128 to 157; these read MEIQFQQPNLQQHQKAGTKGGKFKGRNRNSNTNKFV and DVPAPSASTTSTSSNTSNSDKNDHNSLSSG. Positions 34 to 91 form a DNA-binding region, AP2/ERF; the sequence is KFVGVRQRPSGRWVAEIKDTTQKIRMWLGTFETAEEAARAYDEAACLLRGSNTRTNFI. A compositionally biased stretch (low complexity) spans 128 to 146; sequence DVPAPSASTTSTSSNTSNS.

Belongs to the AP2/ERF transcription factor family. ERF subfamily.

The protein localises to the nucleus. Transcription factor involved in the symbiotic nodule signaling pathway in response to rhizobial stimulation. Functions as a transcriptional regulator required for root infection by symbiotic rhizobia, infection thread (IT) formation, and nodule development. May coordinate these processes. Functions downstream of the CCAMK-CYCLOPS complex. Probably not involved in arbuscular mycorrhizal (AM) symbiosis. The polypeptide is Ethylene-responsive transcription factor ERN1 (Lotus japonicus (Lotus corniculatus var. japonicus)).